Here is a 695-residue protein sequence, read N- to C-terminus: Elongation factor G 1 (695 aa).

One can recognise a tr-type G domain in the interval 6–284 (KKVRNIGISA…VTRYLPCPAD (279 aa)). GTP is bound by residues 15–22 (AHIDSGKT), 82–86 (DTPGH), and 136–139 (NKCD).

It belongs to the TRAFAC class translation factor GTPase superfamily. Classic translation factor GTPase family. EF-G/EF-2 subfamily.

Its subcellular location is the cytoplasm. Its function is as follows. Catalyzes the GTP-dependent ribosomal translocation step during translation elongation. During this step, the ribosome changes from the pre-translocational (PRE) to the post-translocational (POST) state as the newly formed A-site-bound peptidyl-tRNA and P-site-bound deacylated tRNA move to the P and E sites, respectively. Catalyzes the coordinated movement of the two tRNA molecules, the mRNA and conformational changes in the ribosome. The sequence is that of Elongation factor G 1 from Syntrophus aciditrophicus (strain SB).